A 124-amino-acid chain; its full sequence is Putative outer membrane protein CT_569 (124 aa).

The N-terminal stretch at 1-31 is a signal peptide; that stretch reads MKKTKKRKQSITLVEMMVVITLIGIIGGALA.

Its subcellular location is the cell outer membrane. The sequence is that of Putative outer membrane protein CT_569 from Chlamydia trachomatis serovar D (strain ATCC VR-885 / DSM 19411 / UW-3/Cx).